Reading from the N-terminus, the 182-residue chain is Ribosome-recycling factor (182 aa).

This sequence belongs to the RRF family.

The protein localises to the cytoplasm. Its function is as follows. Responsible for the release of ribosomes from messenger RNA at the termination of protein biosynthesis. May increase the efficiency of translation by recycling ribosomes from one round of translation to another. This Nostoc sp. (strain PCC 7120 / SAG 25.82 / UTEX 2576) protein is Ribosome-recycling factor.